The chain runs to 207 residues: Dephospho-CoA kinase (207 aa).

Residues 8–207 (AIALTGSIGS…LPCVDCVQSS (200 aa)) enclose the DPCK domain. 16–21 (GSGKST) serves as a coordination point for ATP.

The protein belongs to the CoaE family.

The protein resides in the cytoplasm. It carries out the reaction 3'-dephospho-CoA + ATP = ADP + CoA + H(+). It participates in cofactor biosynthesis; coenzyme A biosynthesis; CoA from (R)-pantothenate: step 5/5. In terms of biological role, catalyzes the phosphorylation of the 3'-hydroxyl group of dephosphocoenzyme A to form coenzyme A. This is Dephospho-CoA kinase from Helicobacter hepaticus (strain ATCC 51449 / 3B1).